Here is a 1120-residue protein sequence, read N- to C-terminus: Terminal uridylyltransferase 1 (1120 aa).

Disordered stretches follow at residues 1–156 (MSKY…SAVE) and 196–221 (AALINGDPGPLSSAVSSSSSGSPHTP). The span at 7–16 (LFNQGTKDGT) shows a compositional bias: polar residues. Positions 17-59 (NASSGSEANSANITSSSAPASSTNTSSPTSSESAVVSPPASTS) are enriched in low complexity. The span at 60-70 (PRRRLIHRRHG) shows a compositional bias: basic residues. Residues 90–103 (NEEKHENFISDSVH) are compositionally biased toward basic and acidic residues. The span at 118–128 (LTTSGSETVMS) shows a compositional bias: polar residues. Low complexity-rich tracts occupy residues 134–154 (AFEAPSPPTASASPPLESTSA) and 207–217 (SSAVSSSSSGS). The C2H2-type; atypical zinc-finger motif lies at 222-253 (PRLFTCDMCLQYVSTSYEALEQHALDQHGDAL). Zn(2+)-binding residues include Cys227, Cys230, His244, and His249. Residues Ser330 and 341-344 (SDID) contribute to the UTP site. Mg(2+) contacts are provided by Asp342 and Asp344. Arg390 provides a ligand contact to RNA. Asp548 contacts Mg(2+). Residues 555–559 (GIRNS), Lys580, Lys584, and 598–599 (SY) each bind UTP. In terms of domain architecture, PAP-associated spans 659-697 (GELLLGFFYYYAFEFDWVNHVVSLNRPGITTKASLGWDV). The important for catalytic activity and RNA binding stretch occupies residues 750–1120 (GMMASSASAA…ARRVLRLLFR (371 aa)). A Nucleotide recognition motif (NRM) motif is present at residues 773–782 (IEDPYEENLN). The tract at residues 800-900 (YRGLLSLLKD…LLSDLEAAFL (101 aa)) is involved in oligomerization. Positions 1047–1076 (PSTTTQGEDPLASGTCEQGGVSPSLPTGAP) are disordered.

It belongs to the DNA polymerase type-B-like family. Homotetramer. Part of a 700kDa complex. Interacts with p45 and p50 RNA ligases. It depends on Mg(2+) as a cofactor. Mn(2+) serves as cofactor.

The protein localises to the mitochondrion. It catalyses the reaction RNA(n) + UTP = RNA(n)-3'-uridine ribonucleotide + diphosphate. With respect to regulation, zinc-binding is required for catalytic activity. Functionally, terminal uridylyltransferase which is involved in the post-transcriptional editing of mitochondrial RNA, a process involving the addition and deletion of uridine (U) nucleotides in the pre-mRNA. Specifically, catalyzes the addition of Us to the 3'-hydroxyl group of guided RNA (gRNA), with a preference for RNAs terminating in 6 Us, but also can add Us to RNAs terminating in 6 adenines (A), 6 cytosines (C), or 6 guanines (G). Can mediate RNA-independent UTP polymerization in vitro. Can mediate pyrophosphate-dependent degradation of synthetic RNA ending with U residues in vitro. The protein is Terminal uridylyltransferase 1 of Leishmania tarentolae (Sauroleishmania tarentolae).